A 224-amino-acid polypeptide reads, in one-letter code: N-terminal Xaa-Pro-Lys N-methyltransferase 1 (224 aa).

Residues G70, R75, 92–94, 120–121, and Q136 contribute to the S-adenosyl-L-methionine site; these read DVT and LQ.

This sequence belongs to the methyltransferase superfamily. NTM1 family.

The protein resides in the nucleus. It catalyses the reaction N-terminal L-alanyl-L-prolyl-L-lysyl-[protein] + 3 S-adenosyl-L-methionine = N-terminal N,N,N-trimethyl-L-alanyl-L-prolyl-L-lysyl-[protein] + 3 S-adenosyl-L-homocysteine + 3 H(+). The enzyme catalyses N-terminal L-seryl-L-prolyl-L-lysyl-[protein] + 3 S-adenosyl-L-methionine = N-terminal N,N,N-trimethyl-L-seryl-L-prolyl-L-lysyl-[protein] + 3 S-adenosyl-L-homocysteine + 3 H(+). The catalysed reaction is N-terminal L-prolyl-L-prolyl-L-lysyl-[protein] + 2 S-adenosyl-L-methionine = N-terminal N,N-dimethyl-L-prolyl-L-prolyl-L-lysyl-[protein] + 2 S-adenosyl-L-homocysteine + 2 H(+). Its function is as follows. Distributive alpha-N-methyltransferase that methylates the N-terminus of target proteins containing the N-terminal motif [Ala/Gly/Pro/Ser]-Pro-Lys when the initiator Met is cleaved. Specifically catalyzes mono-, di- or tri-methylation of the exposed alpha-amino group of the Ala, Gly or Ser residue in the [Ala/Gly/Ser]-Pro-Lys motif and mono- or di-methylation of Pro in the Pro-Pro-Lys motif. Required during mitosis for normal bipolar spindle formation and chromosome segregation via its action on target proteins. The sequence is that of N-terminal Xaa-Pro-Lys N-methyltransferase 1 (ntmt1) from Xenopus tropicalis (Western clawed frog).